We begin with the raw amino-acid sequence, 1794 residues long: Non-reducing polyketide synthase nscA (1794 aa).

An N-terminal acylcarrier protein transacylase domain (SAT) region spans residues 19-256 (DLKDLFRRLH…PLPVYDGLCH (238 aa)). The region spanning 389 to 822 (ASKLAIVGMA…GGNTTVLLED (434 aa)) is the Ketosynthase family 3 (KS3) domain. Over residues 428-440 (DRFDLNTHYDPTG) the composition is skewed to basic and acidic residues. Residues 428-448 (DRFDLNTHYDPTGKTENATQT) form a disordered region. Catalysis depends on for beta-ketoacyl synthase activity residues C562, H697, and H740. Residues 927–1230 (TFTGQGAYYS…SVISSCRRNE (304 aa)) form a malonyl-CoA:ACP transacylase (MAT) domain region. Positions 1314-1633 (TSLVHQITTE…RLLMDRFFSP (320 aa)) are product template (PT) domain. An N-terminal hotdog fold region spans residues 1318-1454 (HQITTETVEA…CVVRFEDPAA (137 aa)). In terms of domain architecture, PKS/mFAS DH spans 1318–1628 (HQITTETVEA…FRRVPRLLMD (311 aa)). The active-site Proton acceptor; for dehydratase activity is H1350. The C-terminal hotdog fold stretch occupies residues 1482–1628 (ASKLSKPLAY…FRRVPRLLMD (147 aa)). Residue D1539 is the Proton donor; for dehydratase activity of the active site. The disordered stretch occupies residues 1637 to 1719 (SHTEKQLQET…ATSDRGDSTD (83 aa)). Polar residues predominate over residues 1644–1655 (QETAPSATNVKK). One can recognise a Carrier domain in the interval 1717–1794 (STDAGVVGQC…EMTAWLEEYC (78 aa)). An O-(pantetheine 4'-phosphoryl)serine modification is found at S1754.

Pantetheine 4'-phosphate serves as cofactor.

It functions in the pathway secondary metabolite biosynthesis. Its function is as follows. Non-reducing polyketide synthase; part of the gene cluster that mediates the biosynthesis of neosartoricin, a prenylated anthracenone that exhibits T-cell antiproliferative activity, suggestive of a physiological role as an immunosuppressive agent. The non-reducing polyketide synthase nscA probably synthesizes and cyclizes the decaketide backbone. The hydrolase nscB then mediates the product release through hydrolysis followed by spontaneous decarboxylation. The prenyltransferase nscD catalyzes the addition of the dimethylallyl group to the aromatic C5. The FAD-dependent monooxygenase nscC is then responsible for the stereospecific hydroxylation at C2. There is no gene encoding O-acetyltransferase in the nsc gene cluster; thus, the last step of 2-O-acetylation leading to neosartoricin may be catalyzed by an unidentified O-acetyltransferase. This is Non-reducing polyketide synthase nscA from Aspergillus fumigatus (strain ATCC MYA-4609 / CBS 101355 / FGSC A1100 / Af293) (Neosartorya fumigata).